We begin with the raw amino-acid sequence, 156 residues long: Large ribosomal subunit protein uL15 (156 aa).

The segment covering methionine 1 to glycine 11 has biased composition (basic and acidic residues). A disordered region spans residues methionine 1 to serine 40. Positions arginine 21 to valine 35 are enriched in gly residues.

Belongs to the universal ribosomal protein uL15 family. Part of the 50S ribosomal subunit.

In terms of biological role, binds to the 23S rRNA. The polypeptide is Large ribosomal subunit protein uL15 (Brucella anthropi (strain ATCC 49188 / DSM 6882 / CCUG 24695 / JCM 21032 / LMG 3331 / NBRC 15819 / NCTC 12168 / Alc 37) (Ochrobactrum anthropi)).